Reading from the N-terminus, the 532-residue chain is All-trans-retinyl ester 13-cis isomerohydrolase (532 aa).

C112 carries the S-palmitoyl cysteine; in membrane form lipid modification. 3 residues coordinate Fe cation: H180, H241, and H313. C329 is lipidated: S-palmitoyl cysteine; in membrane form. H527 serves as a coordination point for Fe cation.

Belongs to the carotenoid oxygenase family. Fe(2+) serves as cofactor. In terms of processing, palmitoylated. Predominantly expressed in brain. Expressed at a low level in the eye.

The protein localises to the cytoplasm. It localises to the cell membrane. It catalyses the reaction an all-trans-retinyl ester + H2O = 13-cis-retinol + a fatty acid + H(+). The catalysed reaction is lutein = (3R,3'S)-zeaxanthin. Functionally, specifically generates 13-cis retinol, a stereoisomeric form of retinoic acid. Capable of catalyzing the isomerization of lutein to meso-zeaxanthin an eye-specific carotenoid. The protein is All-trans-retinyl ester 13-cis isomerohydrolase (rpe65b) of Danio rerio (Zebrafish).